The primary structure comprises 729 residues: Solute carrier family 15 member 2 (729 aa).

A disordered region spans residues 1–35 (MNPFQKNESKETLFSPVSTEEMLPRPPSPPKKSPP). Residues 1 to 57 (MNPFQKNESKETLFSPVSTEEMLPRPPSPPKKSPPKIFGSSYPVSIAFIVVNEFCER) are Cytoplasmic-facing. At S9 the chain carries Phosphoserine. T12 bears the Phosphothreonine mark. Phosphoserine is present on S28. Residues 58–78 (FSYYGMKAVLTLYFLYFLHWN) form a helical membrane-spanning segment. At 79 to 87 (EDTSTSVYH) the chain is on the extracellular side. The chain crosses the membrane as a helical span at residues 88 to 108 (AFSSLCYFTPILGAAIADSWL). Over 109–113 (GKFKT) the chain is Cytoplasmic. A helical membrane pass occupies residues 114–134 (IIYLSLVYVLGHVFKSLGAIP). Residues 135-139 (ILGGK) are Extracellular-facing. The chain crosses the membrane as a helical span at residues 140–160 (MLHTILSLVGLSLIALGTGGI). The Cytoplasmic segment spans residues 161 to 183 (KPCVAAFGGDQFEEEHAEARTRY). The chain crosses the membrane as a helical span at residues 184-204 (FSVFYLAINAGSLISTFITPM). Residues 205 to 217 (LRGDVKCFGQDCY) are Extracellular-facing. Residues 218–238 (ALAFGVPGLLMVLALVVFAMG) form a helical membrane-spanning segment. The Cytoplasmic segment spans residues 239 to 295 (SKMYRKPPPEGNIVAQVIKCIWFALCNRFRNRSGDLPKRQHWLDWAAEKYPKHLIAD). A helical transmembrane segment spans residues 296 to 316 (VKALTRVLFLYIPLPMFWALL). At 317–343 (DQQGSRWTLQANKMNGDLGFFVLQPDQ) the chain is on the extracellular side. The helical transmembrane segment at 344 to 364 (MQVLNPFLVLIFIPLFDLVIY) threads the bilayer. The Cytoplasmic segment spans residues 365 to 380 (RLISKCRINFSSLRKM). A helical membrane pass occupies residues 381-401 (AVGMILACLAFAVAALVETKI). Residues 402-611 (NGMIHPQPAS…PVNKLSIAWQ (210 aa)) lie on the Extracellular side of the membrane. The tract at residues 402 to 611 (NGMIHPQPAS…PVNKLSIAWQ (210 aa)) is extracellular domain (ECD). N-linked (GlcNAc...) asparagine glycosylation is found at N435, N448, N528, and N587. The helical transmembrane segment at 612–632 (LPQYVLVTAAEVMFSVTGLEF) threads the bilayer. Topologically, residues 633-643 (SYSQAPSSMKS) are cytoplasmic. Residues 644–664 (VLQAAWLLTVAVGNIIVLVVA) form a helical membrane-spanning segment. Residues 665–674 (QFSGLAQWAE) lie on the Extracellular side of the membrane. A helical membrane pass occupies residues 675-695 (FVLFSCLLLVVCLIFSVMAYY). Residues 696–729 (YVPLKSEDTREATDKQIPAVQGNMINLETKNTRL) are Cytoplasmic-facing.

It belongs to the major facilitator superfamily. Proton-dependent oligopeptide transporter (POT/PTR) (TC 2.A.17) family. In terms of assembly, interacts (via extracellular domain region) with trypsin. In terms of tissue distribution, strongly expressed in kidney cortex and medulla. Also detected in brain, lung and spleen. Expressed in choroid plexus.

Its subcellular location is the apical cell membrane. It is found in the cytoplasmic vesicle. The protein localises to the phagosome membrane. It localises to the cell membrane. It catalyses the reaction a dipeptide(out) + 2 H(+)(out) = a dipeptide(in) + 2 H(+)(in). The catalysed reaction is glycyl-L-leucine(out) + 2 H(+)(out) = glycyl-L-leucine(in) + 2 H(+)(in). The enzyme catalyses glycyl-L-lysine(out) + 2 H(+)(out) = glycyl-L-lysine(in) + 2 H(+)(in). It carries out the reaction glycyl-L-glutamate(out) + 3 H(+)(out) = glycyl-L-glutamate(in) + 3 H(+)(in). It catalyses the reaction L-alanyl-L-alanine(out) + 2 H(+)(out) = L-alanyl-L-alanine(in) + 2 H(+)(in). The catalysed reaction is an L-amino acid tripeptide(out) + 2 H(+)(out) = an L-amino acid tripeptide(in) + 2 H(+)(in). The enzyme catalyses N-acetyl-D-muramoyl-L-alanyl-D-isoglutamine(out) + 3 H(+)(out) = N-acetyl-D-muramoyl-L-alanyl-D-isoglutamine(in) + 3 H(+)(in). It carries out the reaction carnosine(out) + 2 H(+)(out) = carnosine(in) + 2 H(+)(in). Its function is as follows. Proton-coupled amino-acid transporter that transports oligopeptides of 2 to 4 amino acids with a preference for dipeptides. Transports neutral and anionic dipeptides with a proton to peptide stoichiometry of 2:1 or 3:1. In kidney, involved in the absorption of circulating di- and tripeptides from the glomerular filtrate. Can also transport beta-lactam antibiotics, such as the aminocephalosporin cefadroxil, and other antiviral and anticancer drugs. Transports the dipeptide-like aminopeptidase inhibitor bestatin. Also able to transport carnosine. Involved in innate immunity by promoting the detection of microbial pathogens by NOD-like receptors (NLRs). Mediates transport of bacterial peptidoglycans across the plasma membrane or, in macrophages, the phagosome membrane: catalyzes the transport of certain bacterial peptidoglycans, such as muramyl dipeptide (MDP), the NOD2 ligand. In Rattus norvegicus (Rat), this protein is Solute carrier family 15 member 2.